The sequence spans 237 residues: 4'-phosphopantetheinyl transferase HetI (237 aa).

Positions 128, 130, and 174 each coordinate Mg(2+).

It belongs to the P-Pant transferase superfamily. Gsp/Sfp/HetI/AcpT family. Requires Mg(2+) as cofactor.

It carries out the reaction apo-[peptidyl-carrier protein] + CoA = holo-[peptidyl-carrier protein] + adenosine 3',5'-bisphosphate + H(+). Functionally, probably activates the acyl carrier protein (ACP) domain of HetM, by transferring the 4'-phosphopantetheinyl moiety of coenzyme A (CoA) to a serine residue. May be required for maintaining vegetative growth and probably acts via HetN to inhibit differentiation. The protein is 4'-phosphopantetheinyl transferase HetI (hetI) of Nostoc sp. (strain PCC 7120 / SAG 25.82 / UTEX 2576).